The primary structure comprises 645 residues: Threonine--tRNA ligase (645 aa).

The region spanning 3–64 is the TGS domain; the sequence is DMINITFPDG…EQDGTITIVT (62 aa). The interval 247-544 is catalytic; that stretch reads DHRKLGKELG…LLEEYKGAFP (298 aa). The Zn(2+) site is built by cysteine 340, histidine 391, and histidine 521.

The protein belongs to the class-II aminoacyl-tRNA synthetase family. Homodimer. Requires Zn(2+) as cofactor.

Its subcellular location is the cytoplasm. It carries out the reaction tRNA(Thr) + L-threonine + ATP = L-threonyl-tRNA(Thr) + AMP + diphosphate + H(+). Catalyzes the attachment of threonine to tRNA(Thr) in a two-step reaction: L-threonine is first activated by ATP to form Thr-AMP and then transferred to the acceptor end of tRNA(Thr). Also edits incorrectly charged L-seryl-tRNA(Thr). In Halalkalibacterium halodurans (strain ATCC BAA-125 / DSM 18197 / FERM 7344 / JCM 9153 / C-125) (Bacillus halodurans), this protein is Threonine--tRNA ligase.